A 330-amino-acid polypeptide reads, in one-letter code: Negative regulator of the PHO system (330 aa).

Residues 8–290 enclose the Protein kinase domain; it reads FQQLEKLGEG…ARQALQHPWF (283 aa). Residues 14–22 and Lys37 each bind ATP; that span reads LGEGTYATV. Asp131 acts as the Proton acceptor in catalysis. The interval 300 to 330 is disordered; that stretch reads MQHLADPYQQSQQQSQQQAQQSQQMDPQTYR. Over residues 308–323 the composition is skewed to low complexity; that stretch reads QQSQQQSQQQAQQSQQ.

This sequence belongs to the protein kinase superfamily. CMGC Ser/Thr protein kinase family. CDC2/CDKX subfamily. As to quaternary structure, interacts with a number of cyclins.

It carries out the reaction L-seryl-[protein] + ATP = O-phospho-L-seryl-[protein] + ADP + H(+). The enzyme catalyses L-threonyl-[protein] + ATP = O-phospho-L-threonyl-[protein] + ADP + H(+). Functionally, when phosphate concentrations are high it phosphorylates the PHO4 transcription factor thus establishing repression. The protein is Negative regulator of the PHO system (PHO85) of Debaryomyces hansenii (strain ATCC 36239 / CBS 767 / BCRC 21394 / JCM 1990 / NBRC 0083 / IGC 2968) (Yeast).